The chain runs to 419 residues: Monooxygenase CTB7 (419 aa).

Belongs to the aromatic-ring hydroxylase family. KMO subfamily.

It functions in the pathway mycotoxin biosynthesis. Monooxygenase; part of the gene cluster that mediates the biosynthesis of cercosporin, a light-activated, non-host-selective toxin. The perylenequinone chromophore of cercosporin absorbs light energy to attain an electronically-activated triplet state and produces active oxygen species such as the hydroxyl radical, superoxide, hydrogen peroxide or singlet oxygen upon reaction with oxygen molecules. These reactive oxygen species cause damage to various cellular components including lipids, proteins and nucleic acids. The first step of cercosporin biosynthesis is performed by the polyketide synthase CTB1 which catalyzes the formation of nor-toralactone. The starter unit acyltransferase (SAT) domain of CTB1 initiates polyketide extension by the selective utilization of acetyl-CoA, which is elongated to the heptaketide in the beta-ketoacyl synthase (KS) domain by successive condensations with six malonyl units introduced by the malonyl acyltransferase (MAT) domain. The product template (PT) domain catalyzes C4-C9 and C2-C11 aldol cyclizations and dehydrations to a trihydroxynaphthalene, which is thought to be delivered to the thioesterase (TE) domain for product release. The bifunctional enzyme CTB3 then methylates nor-toralactone to toralactone before conducting an unusual oxidative aromatic ring opening. The O-methyltransferase CTB2 further methylates the nascent OH-6 of the CBT3 product, blocking further oxidation at this site before the reductase CTB6 reduces the 2-oxopropyl ketone at position C7, giving naphthalene. The FAD-dependent monooxygenase CTB5 in concert with the multicopper oxidase CTB12 are responsible for homodimerization of naphthalene with CTB7 installing the dioxepine moiety, finally producing cercosporin. The fasciclin domain-containing protein CTB11 might act with CTB5 and CTB12 whereas the roles of CTB9 and CTB10 have still to be elucidated. This chain is Monooxygenase CTB7, found in Cercospora beticola (Sugarbeet leaf spot fungus).